The chain runs to 143 residues: 3-dehydroquinate dehydratase (143 aa).

Tyr-22 (proton acceptor) is an active-site residue. Substrate-binding residues include Asn-73, His-79, and Asp-86. Residue His-99 is the Proton donor of the active site. Substrate contacts are provided by residues 100-101 (LS) and Arg-110.

This sequence belongs to the type-II 3-dehydroquinase family. As to quaternary structure, homododecamer.

It catalyses the reaction 3-dehydroquinate = 3-dehydroshikimate + H2O. It participates in metabolic intermediate biosynthesis; chorismate biosynthesis; chorismate from D-erythrose 4-phosphate and phosphoenolpyruvate: step 3/7. Its function is as follows. Catalyzes a trans-dehydration via an enolate intermediate. In Salinispora tropica (strain ATCC BAA-916 / DSM 44818 / JCM 13857 / NBRC 105044 / CNB-440), this protein is 3-dehydroquinate dehydratase.